Here is a 118-residue protein sequence, read N- to C-terminus: MLFFAVLGLLFFLIFFLVLVFHAFLWNLDLGIFSGERSWVSSFECGFLSQRVTENYFSYTYFILLVFFVVFDLEVSLLLNMPLQGVLYKNFFSYLFFLVLLGIGFLVEVRRGYVRWAY.

The next 3 helical transmembrane spans lie at 1-21, 59-79, and 86-106; these read MLFF…VLVF, YTYF…SLLL, and VLYK…IGFL.

This sequence belongs to the complex I subunit 3 family.

The protein resides in the mitochondrion membrane. It carries out the reaction a ubiquinone + NADH + 5 H(+)(in) = a ubiquinol + NAD(+) + 4 H(+)(out). In terms of biological role, core subunit of the mitochondrial membrane respiratory chain NADH dehydrogenase (Complex I) that is believed to belong to the minimal assembly required for catalysis. Complex I functions in the transfer of electrons from NADH to the respiratory chain. The immediate electron acceptor for the enzyme is believed to be ubiquinone. This chain is NADH-ubiquinone oxidoreductase chain 3 (ND3), found in Fasciola hepatica (Liver fluke).